The following is a 292-amino-acid chain: Coatomer subunit epsilon-1 (292 aa).

Belongs to the COPE family. Oligomeric complex that consists of at least the alpha, beta, beta', gamma, delta, epsilon and zeta subunits.

The protein localises to the cytoplasm. It localises to the golgi apparatus membrane. Its subcellular location is the cytoplasmic vesicle. The protein resides in the COPI-coated vesicle membrane. In terms of biological role, the coatomer is a cytosolic protein complex that binds to dilysine motifs and reversibly associates with Golgi non-clathrin-coated vesicles, which further mediate biosynthetic protein transport from the ER, via the Golgi up to the trans Golgi network. The coatomer complex is required for budding from Golgi membranes, and is essential for the retrograde Golgi-to-ER transport of dilysine-tagged proteins. The polypeptide is Coatomer subunit epsilon-1 (Arabidopsis thaliana (Mouse-ear cress)).